The chain runs to 176 residues: MDLPGPIHDILLVFLGSGLILGGLGVVLLTNPISSAFSLGLVLVCISLFYIPSNSYFVAAAQLLIYVGAINVLIVFAVMFMNGSEYYNDFHLWTIGDGFTSLVCTSILFSLITTIPDTSWYGIIWTTRSNQIIEQDLTSNVQQIGIHLSTDFYLPFELISIILLVALIGAIAMARQ.

Helical transmembrane passes span 10–30 (ILLV…VLLT), 32–52 (PISS…FYIP), 61–81 (AQLL…VMFM), 92–112 (LWTI…FSLI), and 152–172 (FYLP…GAIA).

This sequence belongs to the complex I subunit 6 family. As to quaternary structure, NDH is composed of at least 16 different subunits, 5 of which are encoded in the nucleus.

Its subcellular location is the plastid. It localises to the chloroplast thylakoid membrane. The catalysed reaction is a plastoquinone + NADH + (n+1) H(+)(in) = a plastoquinol + NAD(+) + n H(+)(out). The enzyme catalyses a plastoquinone + NADPH + (n+1) H(+)(in) = a plastoquinol + NADP(+) + n H(+)(out). Functionally, NDH shuttles electrons from NAD(P)H:plastoquinone, via FMN and iron-sulfur (Fe-S) centers, to quinones in the photosynthetic chain and possibly in a chloroplast respiratory chain. The immediate electron acceptor for the enzyme in this species is believed to be plastoquinone. Couples the redox reaction to proton translocation, and thus conserves the redox energy in a proton gradient. The protein is NAD(P)H-quinone oxidoreductase subunit 6, chloroplastic (ndhG) of Chloranthus spicatus (Chulantree).